A 240-amino-acid chain; its full sequence is Protein RoBo-1 (240 aa).

Positions 1 to 26 (MSWFLVLKCLLTVCIISHLSVSSTES) are cleaved as a signal peptide. Asparagine 42 is a glycosylation site (N-linked (GlcNAc...) asparagine). Disulfide bonds link cysteine 47–cysteine 76, cysteine 81–cysteine 102, cysteine 103–cysteine 108, cysteine 127–cysteine 151, and cysteine 144–cysteine 171. N-linked (GlcNAc...) asparagine glycosylation is present at asparagine 153.

This sequence belongs to the CNF-like-inhibitor family. N-glycosylated. As to expression, expressed abundantly in bone, including the lengthening growth plate where cartilage is remodeled into bone.

The protein resides in the secreted. Functionally, may play a novel role in the growth or remodeling of bone. The polypeptide is Protein RoBo-1 (Rattus norvegicus (Rat)).